Here is a 451-residue protein sequence, read N- to C-terminus: MPREIITLQLGQCGNQIGFEFWKQLCAEHGISPEGIVEEFATEGTDRKDVFFYQADDEHYIPRAVLLDLEPRVIHSILNSPYAKLYNPENIYLSEHGGGAGNNWASGFSQGEKIHEDIFDIIDREADGSDSLEGFVLCHSIAGGTGSGLGSYLLERLNDRYPKKLVQTYSVFPNQDEMSDVVVQPYNSLLTLKRLTQNADCVVVLDNTALNRIATDRLHIQNPSFSQINQLVSTIMSASTTTLRYPGYMNNDLIGLIASLIPTPRLHFLMTGYTPLTTDQSVASVRKTTVLDVMRRLLQPKNVMVSTGRDRQTNHCYIAILNIIQGEVDPTQVHKSLQRIRERKLANFIPWGPASIQVALSRKSPYLPSAHRVSGLMMANHTSISSLFERTCRQYDKLRKREAFLEQFRKEDIFKENFDELDTSREIVQQLIDEYHAATRPDYISWGTQEQ.

Serine 131 bears the Phosphoserine; by BRSK1 mark. 142–148 lines the GTP pocket; the sequence is AGGTGSG.

It belongs to the tubulin family. In terms of assembly, component of the gamma-tubulin ring complex (gTuRC) consisting of TUBGCP2, TUBGCP3, TUBGCP4, TUBGCP5 and TUBGCP6 and gamma-tubulin TUBG1 or TUBG2. TUBGCP2, TUBGCP3, TUBGCP4, TUBGCP5 and TUBGCP6 assemble in a 5:5:2:1:1 stoichiometry; each is associated with a gamma-tubulin, thereby arranging 14 gamma-tubulins in a helical manner. Gamma-tubulin at the first position is blocked by TUBGCP3 at the last position, allowing 13 protafilaments to grow into a microtubule. The gTuRC (via TUBGCP3 and TUBGCP6) interacts with ACTB and MZT1; the interactions form a luminal bridge that stabilizes the initial structure during complex assembly. The gTuRC (via TUBGCP2) interacts with MZT2A/MZT2B and CDK5RAP2 (via CM1 motif); the interactions play a role in gTuRC activation. Interacts with alpha-beta tubulin heterodimers; the interaction allows microtubules to nucleate from the gTuRC. Interacts with B9D2. Interacts with CDK5RAP2; the interaction is leading to centrosomal localization of TUBG1 and CDK5RAP2. Interacts with CIMAP3. Interacts with SAS6 and NUP62 at the centrosome. Interacts with EML3 (phosphorylated at 'Thr-881') and HAUS8. Interacts with DNM2; this interaction may participate in centrosome cohesion. Interacts with CCDC66. Phosphorylation at Ser-131 by BRSK1 regulates centrosome duplication, possibly by mediating relocation of gamma-tubulin and its associated proteins from the cytoplasm to the centrosome.

Its subcellular location is the cytoplasm. It localises to the cytoskeleton. It is found in the microtubule organizing center. The protein localises to the centrosome. The protein resides in the spindle. In terms of biological role, tubulin is the major constituent of microtubules, protein filaments consisting of alpha- and beta-tubulin heterodimers. Gamma-tubulin is a key component of the gamma-tubulin ring complex (gTuRC) which mediates microtubule nucleation. The gTuRC regulates the minus-end nucleation of alpha-beta tubulin heterodimers that grow into microtubule protafilaments, a critical step in centrosome duplication and spindle formation. The sequence is that of Tubulin gamma-1 chain from Bos taurus (Bovine).